A 196-amino-acid polypeptide reads, in one-letter code: Probable histone chaperone ASF1A (196 aa).

Over residues 146 to 157 (VTKFPIDFHPEE) the composition is skewed to basic and acidic residues. Residues 146-196 (VTKFPIDFHPEEEQTAATAAPPEQSDEQQPNVNGEAQVLPDQSVEPKPEES) form a disordered region.

Belongs to the ASF1 family. Interacts with histone H3 and histone H4. Component of the HIRA complex made of UBN1, UBN2, ASF1A, CABIN1 and HIRA. Interacts with HIRA. Expressed in leaves and flower buds.

Its subcellular location is the nucleus. It localises to the nucleolus. Its function is as follows. Histone chaperone that facilitates histone deposition and histone exchange and removal during nucleosome assembly and disassembly. While encoded by a region of the Arabidopsis thaliana genome that is homologous to the Brassica S-locus for self incompatibility, this protein may not play the same role in Arabidopsis thaliana. This is Probable histone chaperone ASF1A (ASF1A) from Arabidopsis thaliana (Mouse-ear cress).